The chain runs to 804 residues: Phenylalanine--tRNA ligase beta subunit (804 aa).

The tRNA-binding domain maps to 38–148 (RSSLKGFVIA…EDAPIGGLFA (111 aa)). The region spanning 401-476 (PEIKQIAFPF…RIYGLDKIEP (76 aa)) is the B5 domain. Positions 454, 460, 463, and 464 each coordinate Mg(2+). In terms of domain architecture, FDX-ACB spans 710–803 (SPFQMVRRDF…VTKATGAYLR (94 aa)).

This sequence belongs to the phenylalanyl-tRNA synthetase beta subunit family. Type 1 subfamily. As to quaternary structure, tetramer of two alpha and two beta subunits. It depends on Mg(2+) as a cofactor.

The protein localises to the cytoplasm. The enzyme catalyses tRNA(Phe) + L-phenylalanine + ATP = L-phenylalanyl-tRNA(Phe) + AMP + diphosphate + H(+). The sequence is that of Phenylalanine--tRNA ligase beta subunit from Bartonella quintana (strain Toulouse) (Rochalimaea quintana).